Consider the following 339-residue polypeptide: DNA-directed RNA polymerase subunit alpha (339 aa).

The interval 1–233 (MVREEITGST…DLFLPFLHTE (233 aa)) is alpha N-terminal domain (alpha-NTD). Residues 264–339 (KKGIPLNCIF…IDLPKNKFSL (76 aa)) are alpha C-terminal domain (alpha-CTD).

Belongs to the RNA polymerase alpha chain family. As to quaternary structure, in plastids the minimal PEP RNA polymerase catalytic core is composed of four subunits: alpha, beta, beta', and beta''. When a (nuclear-encoded) sigma factor is associated with the core the holoenzyme is formed, which can initiate transcription.

The protein localises to the plastid. It localises to the chloroplast. The catalysed reaction is RNA(n) + a ribonucleoside 5'-triphosphate = RNA(n+1) + diphosphate. Functionally, DNA-dependent RNA polymerase catalyzes the transcription of DNA into RNA using the four ribonucleoside triphosphates as substrates. The sequence is that of DNA-directed RNA polymerase subunit alpha from Zea mays (Maize).